The primary structure comprises 403 residues: Dihydroorotase (403 aa).

Positions 48 and 50 each coordinate Zn(2+). Residues 50–52 and asparagine 82 contribute to the substrate site; that span reads HLR. Positions 140, 172, 211, and 277 each coordinate Zn(2+). Aspartate 277 is a catalytic residue. Histidine 281 serves as a coordination point for substrate.

Belongs to the metallo-dependent hydrolases superfamily. DHOase family. Class I DHOase subfamily. Requires Zn(2+) as cofactor.

The catalysed reaction is (S)-dihydroorotate + H2O = N-carbamoyl-L-aspartate + H(+). It functions in the pathway pyrimidine metabolism; UMP biosynthesis via de novo pathway; (S)-dihydroorotate from bicarbonate: step 3/3. In terms of biological role, catalyzes the reversible cyclization of carbamoyl aspartate to dihydroorotate. The protein is Dihydroorotase of Archaeoglobus fulgidus (strain ATCC 49558 / DSM 4304 / JCM 9628 / NBRC 100126 / VC-16).